Here is a 1177-residue protein sequence, read N- to C-terminus: Phospholipid-transporting ATPase IF (1177 aa).

Residues 1–55 (MWRWIRQQLGFDPPHQSDTRTIYVANRFPQNGLYTPQKFIDNRIISSKYTVWNFV) are Cytoplasmic-facing. The helical transmembrane segment at 56 to 77 (PKNLFEQFRRVANFYFLIIFLV) threads the bilayer. Residues 78–82 (QLMID) lie on the Extracellular side of the membrane. A helical transmembrane segment spans residues 83-104 (TPTSPVTSGLPLFFVITVTAIK). Residues 105–289 (QGYEDWLRHN…SAVEKSMNTF (185 aa)) are Cytoplasmic-facing. A helical transmembrane segment spans residues 290–311 (LIIYLVILISEAVISTILKYTW). Residues 312–341 (QAEEKWDEPWYNQKTEHQRNSSKILRFISD) are Extracellular-facing. A helical transmembrane segment spans residues 342–359 (FLAFLVLYNFIIPISLYV). Residues 360–876 (TVEMQKFLGS…HGHFYYIRIA (517 aa)) lie on the Cytoplasmic side of the membrane. The 4-aspartylphosphate intermediate role is filled by Asp-407. ATP-binding residues include Asp-407, Lys-408, Thr-409, Glu-531, Phe-572, Lys-595, Arg-626, Thr-706, Gly-707, Asp-708, Arg-794, and Lys-800. Asp-407 lines the Mg(2+) pocket. Thr-409 serves as a coordination point for Mg(2+). Asp-821 is a Mg(2+) binding site. 2 residues coordinate ATP: Asn-824 and Asp-825. Asp-825 provides a ligand contact to Mg(2+). Residues 877-898 (TLVQYFFYKNVCFITPQFLYQF) traverse the membrane as a helical segment. The Extracellular segment spans residues 899–910 (YCLFSQQTLYDS). Residues 911-930 (VYLTLYNICFTSLPILIYSL) traverse the membrane as a helical segment. At 931-960 (LEQHVDPHVLQNKPTLYRDISKNRLLSIKT) the chain is on the cytoplasmic side. The chain crosses the membrane as a helical span at residues 961-982 (FLYWTILGFSHAFIFFFGSYLL). Residues 983-997 (IGKDTSLLGNGQMFG) are Extracellular-facing. Residues 998–1020 (NWTFGTLVFTVMVITVTVKMALE) form a helical membrane-spanning segment. Residues 1021–1025 (THFWT) lie on the Cytoplasmic side of the membrane. A helical membrane pass occupies residues 1026–1047 (WINHLVTWGSIIFYFVFSLFYG). Residues 1048–1065 (GILWPFLGSQNMYFVFIQ) lie on the Extracellular side of the membrane. Residues 1066–1090 (LLSSGSAWFAIILMVVTCLFLDIIK) form a helical membrane-spanning segment. The Cytoplasmic segment spans residues 1091 to 1177 (KVFDRHLHPT…TLSTMDSSTC (87 aa)). Ser-1154 is subject to Phosphoserine.

It belongs to the cation transport ATPase (P-type) (TC 3.A.3) family. Type IV subfamily. In terms of assembly, component of a P4-ATPase flippase complex which consists of a catalytic alpha subunit ATP11B and an accessory beta subunit TMEM30A. Requires Mg(2+) as cofactor.

It is found in the recycling endosome membrane. The protein resides in the early endosome. It localises to the endoplasmic reticulum. Its subcellular location is the golgi apparatus. The protein localises to the trans-Golgi network. It carries out the reaction ATP + H2O + phospholipidSide 1 = ADP + phosphate + phospholipidSide 2.. The catalysed reaction is a 1,2-diacyl-sn-glycero-3-phospho-L-serine(out) + ATP + H2O = a 1,2-diacyl-sn-glycero-3-phospho-L-serine(in) + ADP + phosphate + H(+). It catalyses the reaction a 1,2-diacyl-sn-glycero-3-phosphoethanolamine(out) + ATP + H2O = a 1,2-diacyl-sn-glycero-3-phosphoethanolamine(in) + ADP + phosphate + H(+). With respect to regulation, the ATPase activity is up-regulated by aminophospholipids PS and PE. Functionally, catalytic component of a P4-ATPase flippase complex which catalyzes the hydrolysis of ATP coupled to the transport of aminophospholipids, phosphatidylserines (PS) and phosphatidylethanolamines (PE), from the outer to the inner leaflet of intracellular membranes. May contribute to the maintenance of membrane lipid asymmetry in endosome compartment. The chain is Phospholipid-transporting ATPase IF (ATP11B) from Homo sapiens (Human).